The following is a 1203-amino-acid chain: DNA-directed RNA polymerase subunit beta' (1203 aa).

Residues cysteine 60, cysteine 62, cysteine 75, and cysteine 78 each contribute to the Zn(2+) site. Mg(2+)-binding residues include aspartate 449, aspartate 451, and aspartate 453. Residues cysteine 818, cysteine 892, cysteine 899, and cysteine 902 each contribute to the Zn(2+) site.

Belongs to the RNA polymerase beta' chain family. As to quaternary structure, the RNAP catalytic core consists of 2 alpha, 1 beta, 1 beta' and 1 omega subunit. When a sigma factor is associated with the core the holoenzyme is formed, which can initiate transcription. Mg(2+) is required as a cofactor. It depends on Zn(2+) as a cofactor.

It carries out the reaction RNA(n) + a ribonucleoside 5'-triphosphate = RNA(n+1) + diphosphate. In terms of biological role, DNA-dependent RNA polymerase catalyzes the transcription of DNA into RNA using the four ribonucleoside triphosphates as substrates. The protein is DNA-directed RNA polymerase subunit beta' of Bacillus cereus (strain ATCC 10987 / NRS 248).